The primary structure comprises 129 residues: Vacuolar transporter chaperone complex subunit 1 (129 aa).

Ser-2 is subject to N-acetylserine. Residues 2–32 are Cytoplasmic-facing; that stretch reads SSAPLLQRTPGKKIALPTRVEPKVFFANERT. A helical membrane pass occupies residues 33–53; the sequence is FLSWLNFTVMLGGLGVGLLNF. Residues 54-59 lie on the Vacuolar side of the membrane; sequence GDKIGR. The chain crosses the membrane as a helical span at residues 60 to 80; that stretch reads VSAGLFTFVAMGTMIYALVTY. Topologically, residues 81–98 are cytoplasmic; the sequence is HWRAAAIRRRGSGPYDDR. Residues 99–119 form a helical membrane-spanning segment; the sequence is LGPTLLCFFLLVAVIINFILR. Residues 120 to 129 lie on the Vacuolar side of the membrane; it reads LKYNDANTKL.

Belongs to the VTC1 family. The VTC core complex is an integral membrane heterooligomer composed of the catalytic subunit VTC4 and the accessory subunits VTC1, VTC2 and VTC3. The complex exists in 2 different sub-complexes: VTC1-VTC2-VCT4 and VCT1-VTC3-VTC4. The VCT1-VTC3-VTC4 subcomplex is mostly found on the vacuolar membrane. The VTC1-VTC2-VCT4 subcomplex is observed in the cell periphery, probably ER and nuclear envelope, but localizes to the vacuole under phosphate starvation. Each subunit contains 3 transmembrane helices. VTC1 is a small membrane protein without hydrophilic domain. VTC2, VTC3 and VTC4 are related and have 2 hydrophilic domains that face the cytosol, an N-terminal SPX domain and the central core domain. The central core in VTC4 is the catalytic domain, with the essential catalytic lysine replaced by isoleucine and leucine in VTC2 and VTC3, respectively. The core complex associates with the accessory subunit VTC5. The complex interacts with the v-SNARE NYV1 and with the V(0) subunit of V-ATPase VPH1.

Its subcellular location is the vacuole membrane. The protein resides in the cytoplasm. It localises to the cell cortex. The protein localises to the endoplasmic reticulum membrane. It is found in the cytoplasmic vesicle. Its subcellular location is the autophagosome membrane. In terms of biological role, accessory subunit of the vacuolar transporter chaperone (VTC) complex. The VTC complex acts as a vacuolar polyphosphate polymerase that catalyzes the synthesis of inorganic polyphosphate (polyP) via transfer of phosphate from ATP to a growing polyP chain, releasing ADP. VTC exposes its catalytic domain VTC4 to the cytosol, where the growing polyP chain winds through a tunnel-shaped pocket, integrating cytoplasmic polymer synthesis with polyP membrane translocation. The VTC complex carries 9 vacuolar transmembrane domains, which are likely to constitute the translocation channel into the organelle lumen. PolyP synthesis is tightly coupled to its transport into the vacuole lumen, in order to avoid otherwise toxic intermediates in the cytosol, and it depends on the proton gradient across the membrane, formed by V-ATPase. VTC1 contributes only 3 transmembrane domains to the complex. The VTC complex also plays a role in vacuolar membrane fusion. Required for SEC18/NSF activity in SNARE priming, membrane binding of LMA1 and V(0) trans-complex formation. The chain is Vacuolar transporter chaperone complex subunit 1 from Saccharomyces cerevisiae (strain ATCC 204508 / S288c) (Baker's yeast).